The following is a 148-amino-acid chain: Deoxyuridine 5'-triphosphate nucleotidohydrolase (148 aa).

Residues 68–70 (RSG), Asn-81, 85–87 (TID), and Lys-95 each bind substrate.

This sequence belongs to the dUTPase family. It depends on Mg(2+) as a cofactor.

The catalysed reaction is dUTP + H2O = dUMP + diphosphate + H(+). It functions in the pathway pyrimidine metabolism; dUMP biosynthesis; dUMP from dCTP (dUTP route): step 2/2. In terms of biological role, this enzyme is involved in nucleotide metabolism: it produces dUMP, the immediate precursor of thymidine nucleotides and it decreases the intracellular concentration of dUTP so that uracil cannot be incorporated into DNA. In Rickettsia canadensis (strain McKiel), this protein is Deoxyuridine 5'-triphosphate nucleotidohydrolase.